The sequence spans 100 residues: MNLTPREKDKLLISLAAMVARGRLERGCKLNHPEAIALITDYVVEGARDGRAVADLMEAGAHVITADQCMDGIAAMIHDVQVEATFPDGTKLVTVHHPIR.

Belongs to the urease gamma subunit family. In terms of assembly, heterotrimer of UreA (gamma), UreB (beta) and UreC (alpha) subunits. Three heterotrimers associate to form the active enzyme.

The protein localises to the cytoplasm. The enzyme catalyses urea + 2 H2O + H(+) = hydrogencarbonate + 2 NH4(+). The protein operates within nitrogen metabolism; urea degradation; CO(2) and NH(3) from urea (urease route): step 1/1. This chain is Urease subunit gamma, found in Jannaschia sp. (strain CCS1).